The primary structure comprises 143 residues: Large ribosomal subunit protein uL11 (143 aa).

Belongs to the universal ribosomal protein uL11 family. As to quaternary structure, part of the ribosomal stalk of the 50S ribosomal subunit. Interacts with L10 and the large rRNA to form the base of the stalk. L10 forms an elongated spine to which L12 dimers bind in a sequential fashion forming a multimeric L10(L12)X complex. In terms of processing, one or more lysine residues are methylated.

Functionally, forms part of the ribosomal stalk which helps the ribosome interact with GTP-bound translation factors. The sequence is that of Large ribosomal subunit protein uL11 from Janthinobacterium sp. (strain Marseille) (Minibacterium massiliensis).